A 396-amino-acid chain; its full sequence is Chorismate synthase (396 aa).

NADP(+) is bound by residues Arg-40 and Arg-46. FMN is bound by residues 134–136 (RSS), 257–258 (QA), Gly-302, 317–321 (KPIPS), and Arg-343.

Belongs to the chorismate synthase family. Homotetramer. FMNH2 serves as cofactor.

The enzyme catalyses 5-O-(1-carboxyvinyl)-3-phosphoshikimate = chorismate + phosphate. It functions in the pathway metabolic intermediate biosynthesis; chorismate biosynthesis; chorismate from D-erythrose 4-phosphate and phosphoenolpyruvate: step 7/7. Catalyzes the anti-1,4-elimination of the C-3 phosphate and the C-6 proR hydrogen from 5-enolpyruvylshikimate-3-phosphate (EPSP) to yield chorismate, which is the branch point compound that serves as the starting substrate for the three terminal pathways of aromatic amino acid biosynthesis. This reaction introduces a second double bond into the aromatic ring system. This chain is Chorismate synthase, found in Bifidobacterium animalis subsp. lactis (strain AD011).